We begin with the raw amino-acid sequence, 258 residues long: Histidine/lysine/arginine/ornithine transport ATP-binding protein HisP (258 aa).

The 247-residue stretch at 7-253 folds into the ABC transporter domain; that stretch reads LHVIDLHKRY…PQSPRLQQFL (247 aa). The ATP site is built by serine 41, glycine 42, glycine 44, lysine 45, serine 46, and threonine 47.

This sequence belongs to the ABC transporter superfamily. As to quaternary structure, the HisPMQJ complex is composed of two ATP-binding proteins (HisP), two transmembrane proteins (HisM and HisQ) and a solute-binding protein (HisJ). The HisPMQ-ArgT complex is composed of two ATP-binding proteins (HisP), two transmembrane proteins (HisM and HisQ) and a solute-binding protein (ArgT).

The protein resides in the cell inner membrane. It carries out the reaction a polar amino acid(out) + ATP + H2O = a polar amino acid(in) + ADP + phosphate + H(+). The catalysed reaction is L-histidine(out) + ATP + H2O = L-histidine(in) + ADP + phosphate + H(+). The enzyme catalyses L-lysine(out) + ATP + H2O = L-lysine(in) + ADP + phosphate + H(+). It catalyses the reaction L-arginine(out) + ATP + H2O = L-arginine(in) + ADP + phosphate + H(+). It carries out the reaction L-ornithine(out) + ATP + H2O = L-ornithine(in) + ADP + phosphate + H(+). Isolated, soluble HisP has a very low ATPase activity. ATPase activity is slightly increased in the presence of HisM and HisQ, and strongly increased when HisJ is also present. Functionally, part of the ABC transporter complex HisPMQJ involved in histidine transport. Is also part of the ABC transporter complex HisPMQ-ArgT involved in lysine/arginine/ornithine transport. Shows ATPase activity. Responsible for energy coupling to the transport system. The protein is Histidine/lysine/arginine/ornithine transport ATP-binding protein HisP of Salmonella typhimurium (strain LT2 / SGSC1412 / ATCC 700720).